We begin with the raw amino-acid sequence, 860 residues long: Leucine--tRNA ligase (860 aa).

Positions 42 to 52 (PYPSGRLHMGH) match the 'HIGH' region motif. Residues 619 to 623 (KMSKS) carry the 'KMSKS' region motif. ATP is bound at residue lysine 622.

The protein belongs to the class-I aminoacyl-tRNA synthetase family.

It is found in the cytoplasm. The catalysed reaction is tRNA(Leu) + L-leucine + ATP = L-leucyl-tRNA(Leu) + AMP + diphosphate. The chain is Leucine--tRNA ligase from Shigella sonnei (strain Ss046).